A 223-amino-acid chain; its full sequence is Phosphoenolpyruvate guanylyltransferase (223 aa).

Positions 140, 156, and 159 each coordinate phosphoenolpyruvate.

Belongs to the CofC family.

The enzyme catalyses phosphoenolpyruvate + GTP + H(+) = enolpyruvoyl-2-diphospho-5'-guanosine + diphosphate. It participates in cofactor biosynthesis; coenzyme F420 biosynthesis. In terms of biological role, guanylyltransferase that catalyzes the activation of phosphoenolpyruvate (PEP) as enolpyruvoyl-2-diphospho-5'-guanosine, via the condensation of PEP with GTP. It is involved in the biosynthesis of coenzyme F420, a hydride carrier cofactor. The protein is Phosphoenolpyruvate guanylyltransferase of Conexibacter woesei (strain DSM 14684 / CCUG 47730 / CIP 108061 / JCM 11494 / NBRC 100937 / ID131577).